The chain runs to 301 residues: Glycine cleavage system transcriptional activator homolog (301 aa).

Residues proline 10–threonine 67 enclose the HTH lysR-type domain. The H-T-H motif DNA-binding region spans phenylalanine 27 to lysine 46.

Belongs to the LysR transcriptional regulatory family.

The protein localises to the cytoplasm. Its function is as follows. Not known, the gcv operon regulated by the E.coli homolog does not exist in H.influenzae, so it probably acts as a transcriptional regulator on some other operon. This is Glycine cleavage system transcriptional activator homolog (gcvA) from Haemophilus influenzae (strain ATCC 51907 / DSM 11121 / KW20 / Rd).